The primary structure comprises 156 residues: S-ribosylhomocysteine lyase (156 aa).

The Fe cation site is built by His56, His60, and Cys123.

Belongs to the LuxS family. In terms of assembly, homodimer. It depends on Fe cation as a cofactor.

It carries out the reaction S-(5-deoxy-D-ribos-5-yl)-L-homocysteine = (S)-4,5-dihydroxypentane-2,3-dione + L-homocysteine. Functionally, involved in the synthesis of autoinducer 2 (AI-2) which is secreted by bacteria and is used to communicate both the cell density and the metabolic potential of the environment. The regulation of gene expression in response to changes in cell density is called quorum sensing. Catalyzes the transformation of S-ribosylhomocysteine (RHC) to homocysteine (HC) and 4,5-dihydroxy-2,3-pentadione (DPD). This is S-ribosylhomocysteine lyase from Staphylococcus saprophyticus subsp. saprophyticus (strain ATCC 15305 / DSM 20229 / NCIMB 8711 / NCTC 7292 / S-41).